A 300-amino-acid polypeptide reads, in one-letter code: MNKIWKLKNVKVGVAPILWTNDDMPELGGDISFDQAISEMAEAGYQGTEIGNKFPKDEKILLRELKKYNLEIASAWFSGYIISDFEKNFQDFQKHCLFLKALGAKVVVFSEQTYSIQGQNKPLFKDKPYFTNQEFENLAQGLNKFGKWSKQHGIELVYHHHMGTGIQSLKETEKILELTDPEFVSLIFDTGHFAHAGEDIVFCLKRLISRIRHIHLKDIRKEKINELKTKNLSFLEGVKQGIFTVPGDGDIKNYPLFFELLAKNNYQGWLIVEAEQDPRKANPLEYAKKAMDYLRSLISW.

The protein belongs to the IolE/MocC family. The cofactor is glutathione. Requires Co(2+) as cofactor. Mn(2+) serves as cofactor.

The catalysed reaction is scyllo-inosose = 3D-3,5/4-trihydroxycyclohexane-1,2-dione + H2O. Functionally, catalyzes the dehydration of inosose (2-keto-myo-inositol, 2KMI or 2,4,6/3,5-pentahydroxycyclohexanone) to 3D-(3,5/4)-trihydroxycyclohexane-1,2-dione (D-2,3-diketo-4-deoxy-epi-inositol). The chain is Inosose dehydratase from Mesomycoplasma hyopneumoniae (strain J / ATCC 25934 / NCTC 10110) (Mycoplasma hyopneumoniae).